The primary structure comprises 314 residues: Thymidylate synthase (314 aa).

Residues arginine 21 and 176–177 (RR) contribute to the dUMP site. The active-site Nucleophile is cysteine 196. Residues 216–219 (RSAD), asparagine 227, and 257–259 (HLY) each bind dUMP. Aspartate 219 lines the (6R)-5,10-methylene-5,6,7,8-tetrahydrofolate pocket. (6R)-5,10-methylene-5,6,7,8-tetrahydrofolate is bound at residue serine 313.

It belongs to the thymidylate synthase family. Bacterial-type ThyA subfamily. As to quaternary structure, homodimer.

The protein localises to the cytoplasm. It carries out the reaction dUMP + (6R)-5,10-methylene-5,6,7,8-tetrahydrofolate = 7,8-dihydrofolate + dTMP. The protein operates within pyrimidine metabolism; dTTP biosynthesis. Functionally, catalyzes the reductive methylation of 2'-deoxyuridine-5'-monophosphate (dUMP) to 2'-deoxythymidine-5'-monophosphate (dTMP) while utilizing 5,10-methylenetetrahydrofolate (mTHF) as the methyl donor and reductant in the reaction, yielding dihydrofolate (DHF) as a by-product. This enzymatic reaction provides an intracellular de novo source of dTMP, an essential precursor for DNA biosynthesis. The polypeptide is Thymidylate synthase (Listeria monocytogenes serotype 4a (strain HCC23)).